A 400-amino-acid chain; its full sequence is MSVSPAAPASGIRRPCYLVLSAHDFRTPRRANIHFITDQLALRGTTRFFSLRYSRLSRMKGDMRLPLDDTANTVVSHNGVDCYLWRTTVHPFNTRRSWLRPVEDAMFRWYAAHPPKQLLDWMRESDVIVFESGIAVAFIELAKRVNPAAKLVYRASDGLSTINVASYIEREFDRVAPTLDVIALVSPAMAAEVASRDNVFHVGHGVDHNLDQLGDPSPYAEGIHAVAVGSMLFDPEFFVVASKAFPQVTFHVIGSGMGRHPGYGDNVIVYGEMKHAQTIGYIKHARFGIAPYASEQVPVYLADSSMKLLQYDFFGLPAVCPNAVVGPYKSRFGYTPGNADSVIAAITQALEAPRVRYRQCLNWSDTTDRVLDPRAYPETRLYPHPPTAAPQLSSEAALSH.

The Proton acceptor role is filled by Asp157. UDP-alpha-D-glucuronate-binding positions include 230–231, 272–273, Tyr292, and 306–310; these read SM, EM, and MKLLQ. Residues 377–400 form a disordered region; that stretch reads PETRLYPHPPTAAPQLSSEAALSH. Over residues 390 to 400 the composition is skewed to polar residues; that stretch reads PQLSSEAALSH.

The protein belongs to the glycosyltransferase 70 family.

It is found in the cell inner membrane. It carries out the reaction alpha-D-Man-(1-&gt;3)-beta-D-Glc-(1-&gt;4)-alpha-D-Glc-1-di-trans,octa-cis-undecaprenyl diphosphate + UDP-alpha-D-glucuronate = beta-D-GlcA-(1-&gt;2)-alpha-D-Man-(1-&gt;3)-beta-D-Glc-(1-&gt;4)-alpha-D-Glc-di-trans,octa-cis-undecaprenyl diphosphate + UDP + H(+). Its pathway is glycan biosynthesis; xanthan biosynthesis. Catalyzes the transfer of a glucuronic acid (GlcA) residue from UDP-glucuronate to mannose-alpha-1,3-glucose-beta-1,4-glucose-P-P-polyisoprenyl to form the lipid-linked tetrasaccharide GlcA-Man-Glc(2)-PP-Pol, with a glucuronic acid-beta-mannose linkage. Is involved in the biosynthesis of the exopolysaccharide xanthan, since it catalyzes the fourth glycosylation step in the assembly of the pentasaccharide-P-P-polyisoprenyl repeating unit of xanthan. Is unable to use the trisaccharide acceptor freed from the pyrophosphate lipid moiety. Does not show specificity for the lipidic portion of the acceptor. Shows diminished activity when tested with 6-O-acetyl-mannose-alpha-1,3-glucose-beta-1,4-glucose-P-P-polyisoprenyl, a putative intermediate in the synthesis of xanthan; this could indicate that acetylation of the internal mannose takes place after the formation of the GumK product. This is UDP-glucuronate:glycolipid 2-beta-glucuronosyltransferase (gumK) from Xanthomonas campestris pv. campestris.